The primary structure comprises 353 residues: MIDADRLITAAGGRDRDEQMDRAIRPLSLADYIGQPTVREQMELFIQAARGRNEALDHTLIFGPPGLGKTTLANIIAQEMGVSIKSTSGPVLERPGDLAAILTNLEPNDVLFIDEIHRLSPIVEEVLYPAMEDFQLDIMIGEGPAARSIKLDLPPFTLVGATTRAGMLTNPLRDRFGIVQRLEFYNIADLSTIVSRSAGILGLVIEPQGAFEIARRARGTPRIANRLLRRVRDFAEVRGNGQITRQTADKALNLLDVDEHGFDHQDRRLLLTMIEKFDGGPVGVDSLAAAISEERHTIEDVLEPYLIQQGYIMRTPRGRVVTRHAYLHFGLNIPSRMGEMPVVDDVVDDPADL.

The interval 4-185 is large ATPase domain (RuvB-L); sequence ADRLITAAGG…FGIVQRLEFY (182 aa). Residues Ile-24, Arg-25, Gly-66, Lys-69, Thr-70, Thr-71, 132–134, Arg-175, Tyr-185, and Arg-222 contribute to the ATP site; that span reads EDF. Thr-70 contacts Mg(2+). Residues 186–256 form a small ATPAse domain (RuvB-S) region; the sequence is NIADLSTIVS…TADKALNLLD (71 aa). Residues 259 to 353 form a head domain (RuvB-H) region; sequence EHGFDHQDRR…DDVVDDPADL (95 aa). DNA is bound by residues Arg-295, Arg-314, and Arg-319.

The protein belongs to the RuvB family. As to quaternary structure, homohexamer. Forms an RuvA(8)-RuvB(12)-Holliday junction (HJ) complex. HJ DNA is sandwiched between 2 RuvA tetramers; dsDNA enters through RuvA and exits via RuvB. An RuvB hexamer assembles on each DNA strand where it exits the tetramer. Each RuvB hexamer is contacted by two RuvA subunits (via domain III) on 2 adjacent RuvB subunits; this complex drives branch migration. In the full resolvosome a probable DNA-RuvA(4)-RuvB(12)-RuvC(2) complex forms which resolves the HJ.

It is found in the cytoplasm. The catalysed reaction is ATP + H2O = ADP + phosphate + H(+). Its function is as follows. The RuvA-RuvB-RuvC complex processes Holliday junction (HJ) DNA during genetic recombination and DNA repair, while the RuvA-RuvB complex plays an important role in the rescue of blocked DNA replication forks via replication fork reversal (RFR). RuvA specifically binds to HJ cruciform DNA, conferring on it an open structure. The RuvB hexamer acts as an ATP-dependent pump, pulling dsDNA into and through the RuvAB complex. RuvB forms 2 homohexamers on either side of HJ DNA bound by 1 or 2 RuvA tetramers; 4 subunits per hexamer contact DNA at a time. Coordinated motions by a converter formed by DNA-disengaged RuvB subunits stimulates ATP hydrolysis and nucleotide exchange. Immobilization of the converter enables RuvB to convert the ATP-contained energy into a lever motion, pulling 2 nucleotides of DNA out of the RuvA tetramer per ATP hydrolyzed, thus driving DNA branch migration. The RuvB motors rotate together with the DNA substrate, which together with the progressing nucleotide cycle form the mechanistic basis for DNA recombination by continuous HJ branch migration. Branch migration allows RuvC to scan DNA until it finds its consensus sequence, where it cleaves and resolves cruciform DNA. The sequence is that of Holliday junction branch migration complex subunit RuvB from Pseudomonas savastanoi pv. phaseolicola (strain 1448A / Race 6) (Pseudomonas syringae pv. phaseolicola (strain 1448A / Race 6)).